We begin with the raw amino-acid sequence, 185 residues long: Transmembrane protein 252 (185 aa).

The next 2 membrane-spanning stretches (helical) occupy residues 8–28 and 39–59; these read VLCA…GFFI and LVVA…GIFW. The segment at 125-149 is disordered; that stretch reads YTETSLEPQDKDKNDPQPEAPPPYP.

The protein localises to the membrane. The sequence is that of Transmembrane protein 252 (Tmem252) from Rattus norvegicus (Rat).